A 183-amino-acid polypeptide reads, in one-letter code: MKMLVGLGNPGKKYSHTRHNIGFKVLEELARRHQIEKEESRYDAIVGHLRINQEKLLLVKPLTFMNLSGKAVRPLFNWFKLELSELLVVYDDMDLPPGTVRIRASGGTGGHKGMQSICESLGSRDFPRIRIGIGRPPGGAIDWVLGEFSESEKPLMQDAIEKAASAIECWVKSGIDASMNAYN.

Residue Y14 participates in tRNA binding. The Proton acceptor role is filled by H19. The tRNA site is built by F64 and N66.

It belongs to the PTH family. Monomer.

Its subcellular location is the cytoplasm. The enzyme catalyses an N-acyl-L-alpha-aminoacyl-tRNA + H2O = an N-acyl-L-amino acid + a tRNA + H(+). In terms of biological role, hydrolyzes ribosome-free peptidyl-tRNAs (with 1 or more amino acids incorporated), which drop off the ribosome during protein synthesis, or as a result of ribosome stalling. Functionally, catalyzes the release of premature peptidyl moieties from peptidyl-tRNA molecules trapped in stalled 50S ribosomal subunits, and thus maintains levels of free tRNAs and 50S ribosomes. The protein is Peptidyl-tRNA hydrolase of Syntrophomonas wolfei subsp. wolfei (strain DSM 2245B / Goettingen).